The following is a 151-amino-acid chain: Deoxyuridine 5'-triphosphate nucleotidohydrolase (151 aa).

Residues 70–72 (RSG), asparagine 83, 87–89 (LID), and methionine 97 each bind substrate.

This sequence belongs to the dUTPase family. Mg(2+) serves as cofactor.

The catalysed reaction is dUTP + H2O = dUMP + diphosphate + H(+). The protein operates within pyrimidine metabolism; dUMP biosynthesis; dUMP from dCTP (dUTP route): step 2/2. Functionally, this enzyme is involved in nucleotide metabolism: it produces dUMP, the immediate precursor of thymidine nucleotides and it decreases the intracellular concentration of dUTP so that uracil cannot be incorporated into DNA. The chain is Deoxyuridine 5'-triphosphate nucleotidohydrolase from Actinobacillus succinogenes (strain ATCC 55618 / DSM 22257 / CCUG 43843 / 130Z).